Here is a 597-residue protein sequence, read N- to C-terminus: uncharacterized protein (597 aa).

Residues 1–23 (MSHEGSRQARDRGVTRSKAEKAR) show a composition bias toward basic and acidic residues. Disordered stretches follow at residues 1–32 (MSHE…VPQV) and 171–192 (RESQ…NPRP). Residues 175-186 (EPTQSSEPSAEP) are compositionally biased toward low complexity. Phosphoserine is present on residues Ser-237 and Ser-241. 2 disordered regions span residues 302-335 (SLLS…MRLD) and 549-569 (EAEE…GVSK). Residues 557-568 (APEQQPIQTGVS) are compositionally biased toward polar residues.

This is an uncharacterized protein from Rattus norvegicus (Rat).